We begin with the raw amino-acid sequence, 381 residues long: Lipid-A-disaccharide synthase (381 aa).

It belongs to the LpxB family.

It catalyses the reaction 2-N,3-O-bis[(3R)-3-hydroxytetradecanoyl]-alpha-D-glucosaminyl 1-phosphate + UDP-2-N,3-O-bis[(3R)-3-hydroxytetradecanoyl]-alpha-D-glucosamine = lipid A disaccharide (E. coli) + UDP + H(+). It carries out the reaction a lipid X + a UDP-2-N,3-O-bis[(3R)-3-hydroxyacyl]-alpha-D-glucosamine = a lipid A disaccharide + UDP + H(+). It participates in glycolipid biosynthesis; lipid IV(A) biosynthesis; lipid IV(A) from (3R)-3-hydroxytetradecanoyl-[acyl-carrier-protein] and UDP-N-acetyl-alpha-D-glucosamine: step 5/6. Condensation of UDP-2,3-diacylglucosamine and 2,3-diacylglucosamine-1-phosphate to form lipid A disaccharide, a precursor of lipid A, a phosphorylated glycolipid that anchors the lipopolysaccharide to the outer membrane of the cell. The sequence is that of Lipid-A-disaccharide synthase from Erwinia tasmaniensis (strain DSM 17950 / CFBP 7177 / CIP 109463 / NCPPB 4357 / Et1/99).